Here is a 349-residue protein sequence, read N- to C-terminus: Glycerol-3-phosphate dehydrogenase [NAD(+)], cytoplasmic (349 aa).

Residue 10 to 15 (GSGNWG) coordinates NAD(+). Substrate is bound at residue lysine 120. Alanine 153 lines the NAD(+) pocket. Serine 154 carries the phosphoserine modification. Lysine 204 acts as the Proton acceptor in catalysis. Arginine 269 contacts NAD(+). A substrate-binding site is contributed by 269 to 270 (RN). An N6-succinyllysine modification is found at lysine 289. Residues lysine 296 and glutamine 298 each contribute to the NAD(+) site. Tyrosine 326 carries the post-translational modification Phosphotyrosine.

This sequence belongs to the NAD-dependent glycerol-3-phosphate dehydrogenase family. In terms of assembly, homodimer.

It is found in the cytoplasm. The catalysed reaction is sn-glycerol 3-phosphate + NAD(+) = dihydroxyacetone phosphate + NADH + H(+). Its function is as follows. Has glycerol-3-phosphate dehydrogenase activity. The polypeptide is Glycerol-3-phosphate dehydrogenase [NAD(+)], cytoplasmic (GPD1) (Pongo abelii (Sumatran orangutan)).